We begin with the raw amino-acid sequence, 406 residues long: 3-oxoacyl-[acyl-carrier-protein] synthase 1 (406 aa).

The 403-residue stretch at methionine 1–arginine 403 folds into the Ketosynthase family 3 (KS3) domain. Catalysis depends on for beta-ketoacyl synthase activity residues cysteine 162, histidine 297, and histidine 332.

This sequence belongs to the thiolase-like superfamily. Beta-ketoacyl-ACP synthases family. In terms of assembly, homodimer.

It is found in the cytoplasm. The enzyme catalyses a fatty acyl-[ACP] + malonyl-[ACP] + H(+) = a 3-oxoacyl-[ACP] + holo-[ACP] + CO2. The catalysed reaction is (3Z)-decenoyl-[ACP] + malonyl-[ACP] + H(+) = 3-oxo-(5Z)-dodecenoyl-[ACP] + holo-[ACP] + CO2. It participates in lipid metabolism; fatty acid biosynthesis. Functionally, involved in the type II fatty acid elongation cycle. Catalyzes the elongation of a wide range of acyl-ACP by the addition of two carbons from malonyl-ACP to an acyl acceptor. Can also use unsaturated fatty acids. Catalyzes a key reaction in unsaturated fatty acid (UFA) synthesis, the elongation of the cis-3-decenoyl-ACP produced by FabA. The polypeptide is 3-oxoacyl-[acyl-carrier-protein] synthase 1 (fabB) (Haemophilus influenzae (strain ATCC 51907 / DSM 11121 / KW20 / Rd)).